The primary structure comprises 362 residues: Alcohol dehydrogenase 13 (362 aa).

The Zn(2+) site is built by C51, H73, C104, C107, C110, C118, and C168. Position 73 (H73) interacts with substrate. NAD(+) contacts are provided by residues 193–198 and 280–282; these read GLGGLG and VGA.

The protein belongs to the zinc-containing alcohol dehydrogenase family. Class-III subfamily. In terms of assembly, homodimer. Requires Zn(2+) as cofactor.

In Catharanthus roseus (Madagascar periwinkle), this protein is Alcohol dehydrogenase 13.